Consider the following 428-residue polypeptide: 3-phosphoshikimate 1-carboxyvinyltransferase (428 aa).

Positions 22, 23, and 27 each coordinate 3-phosphoshikimate. A phosphoenolpyruvate-binding site is contributed by lysine 22. 2 residues coordinate phosphoenolpyruvate: glycine 94 and arginine 122. 3-phosphoshikimate is bound by residues serine 169, serine 170, glutamine 171, serine 197, aspartate 315, and lysine 342. Residue glutamine 171 participates in phosphoenolpyruvate binding. Aspartate 315 functions as the Proton acceptor in the catalytic mechanism. Phosphoenolpyruvate is bound by residues arginine 346, arginine 389, and lysine 414.

The protein belongs to the EPSP synthase family. In terms of assembly, monomer.

The protein resides in the cytoplasm. It carries out the reaction 3-phosphoshikimate + phosphoenolpyruvate = 5-O-(1-carboxyvinyl)-3-phosphoshikimate + phosphate. Its pathway is metabolic intermediate biosynthesis; chorismate biosynthesis; chorismate from D-erythrose 4-phosphate and phosphoenolpyruvate: step 6/7. Catalyzes the transfer of the enolpyruvyl moiety of phosphoenolpyruvate (PEP) to the 5-hydroxyl of shikimate-3-phosphate (S3P) to produce enolpyruvyl shikimate-3-phosphate and inorganic phosphate. The chain is 3-phosphoshikimate 1-carboxyvinyltransferase from Cellvibrio japonicus (strain Ueda107) (Pseudomonas fluorescens subsp. cellulosa).